Consider the following 1304-residue polypeptide: MEAVPGTPPPPPSESPPPPSPPPPSTPSPPPCSPDGRAATPHLLHHRLPLPDDREDGELEEGELEDDGAEEVQDPPGGQERSRKEKGEKHHSDSEEEKSHRRLKRKRKKEREKEKRRSKKRRKSKHKRHASSSDDFSDFSDDSDFSPSEKSHRKYRDYSPPYAPSHQQYSSSHNAPLPKKSYSKMDSKGYSMYEDYENEQYGEYEGDEEEDMGKEDYDDFTKELNQYRRAKEGSSRGRGSRGRGRGYRGRGSRGGSRGRGMGRGSRGRGRGSMGEHPEDEEDLYEEEIEYGESEEPMGDDDYDDYSKELNQYRRSKDSRGRGLSRGRGRGSRGGRGKGMGRGRGRGGRGGMSKGGMNDDEDFYDDDMGDGGGGSYRRSDHDKPHQQSDKKGKVICKYFVEGRCTWGDHCNFSHDIELPKKRELCKFYITGFCARAENCPYMHGDFPCKLYHTTGNCINGDDCMFSHDPLTEETRELLDKMLADDAEAGAEDEKEVEELKKQGINPLPKPPPGVGLLPTPPRPPGPPAPTSPNGRPMQGGPPPPPPPPPPPPGPPQMSLPTHEPLSPQQLQQDMYNKKIPSLFEIVVRPTGQLAEKLGVRFPGPGGPSGPMGPGPNMGPPGPMGGPMHPDMHPDMHPDMHPDMHPDMHPDMHPDMHPDMHPDMPMGPGMNPGPPMGPGGPPMMPYGPGDSPHSGMMPPIPPAQNFYENFYPQQEGMEMEPGLVGDAEDYGHYEELPGQPGEPLFPEHPLEPDSFPEGGPPGRPKAGAGVPDFLPSAQRALYLRIQQKQQEEERARRLAESSKQDRENEEGDTGNWYSSDEDEGGSSVTSILKTLRQQTSSRPQASVGEPSSSGLGDPRLQKGHPTGSRLSDPRLSRDPRLSRHAETSGGSGPGDSGPSDPRLARALPTSKAEGSLHSSPAGPSSSKGQPPAEEEEGERALREKAVNIPLDPLPGHPLRDPRSQLQQFSHIKKDVTLSKPSFARTVLWNPEDLIPLPIPKQDVPPVPAALQSLPALDPRLHRSTPPGPPNTRQRPGSTDPSTSGSNLPDFELLSRILKTVNVNTPGQSEKPSDPRVRKTPTDPRLQKPADPVAASRAAKPCPTEASPPAASPSGDSSPPATAPYDPRVLAAGGLGQGSSSGQSSVLSGISLYDPRTPNAGGKTAEPASDTSAQPKGPEGNGKGSASKAKEPPFVRKSALEQPETGKASTDGATATDRYNSYNRPRPKATAAPTAASSTPPPEGATPQPGVHNLPVPTLFGTVKPAPKTGTGSPFAGNSPAREGEQDAGSLKDVFKGFDPTASPFCQ.

The segment covering 1–33 (MEAVPGTPPPPPSESPPPPSPPPPSTPSPPPCS) has biased composition (pro residues). The tract at residues 1 to 387 (MEAVPGTPPP…SDHDKPHQQS (387 aa)) is disordered. The span at 53–73 (DREDGELEEGELEDDGAEEVQ) shows a compositional bias: acidic residues. The span at 80–99 (ERSRKEKGEKHHSDSEEEKS) shows a compositional bias: basic and acidic residues. A phosphoserine mark is found at S92 and S94. Positions 94 to 128 (SEEEKSHRRLKRKRKKEREKEKRRSKKRRKSKHKR) form a coiled coil. Positions 100-130 (HRRLKRKRKKEREKEKRRSKKRRKSKHKRHA) are enriched in basic residues. Over residues 135 to 144 (DFSDFSDDSD) the composition is skewed to acidic residues. Y155 bears the Phosphotyrosine mark. Over residues 165 to 174 (SHQQYSSSHN) the composition is skewed to polar residues. Over residues 194–218 (EDYENEQYGEYEGDEEEDMGKEDYD) the composition is skewed to acidic residues. A compositionally biased stretch (basic and acidic residues) spans 219 to 235 (DFTKELNQYRRAKEGSS). A compositionally biased stretch (basic residues) spans 238 to 251 (RGSRGRGRGYRGRG). Positions 252–264 (SRGGSRGRGMGRG) are enriched in gly residues. Residues 277 to 303 (PEDEEDLYEEEIEYGESEEPMGDDDYD) are compositionally biased toward acidic residues. Positions 304-320 (DYSKELNQYRRSKDSRG) are enriched in basic and acidic residues. The span at 322–346 (GLSRGRGRGSRGGRGKGMGRGRGRG) shows a compositional bias: basic residues. Acidic residues predominate over residues 357–368 (NDDEDFYDDDMG). Residues 376-387 (RRSDHDKPHQQS) are compositionally biased toward basic and acidic residues. 3 C3H1-type zinc fingers span residues 389-416 (KKGK…HDIE), 418-445 (PKKR…HGDF), and 446-469 (PCKL…HDPL). Residues 485 to 495 (AEAGAEDEKEV) show a composition bias toward acidic residues. The segment at 485 to 567 (AEAGAEDEKE…LPTHEPLSPQ (83 aa)) is disordered. Composition is skewed to pro residues over residues 506 to 529 (LPKP…PAPT) and 538 to 556 (GGPP…PPQM). Position 599 is an asymmetric dimethylarginine (R599). Disordered stretches follow at residues 601–691 (PGPG…DSPH), 719–970 (PGLV…SHIK), and 994–1304 (LPIP…PFCQ). Over residues 603–622 (PGGPSGPMGPGPNMGPPGPM) the composition is skewed to pro residues. Residues 628-660 (PDMHPDMHPDMHPDMHPDMHPDMHPDMHPDMHP) show a composition bias toward basic and acidic residues. The span at 669 to 683 (NPGPPMGPGGPPMMP) shows a compositional bias: pro residues. Residues 778–809 (ALYLRIQQKQQEEERARRLAESSKQDRENEEG) are a coiled coil. The span at 787–804 (QQEEERARRLAESSKQDR) shows a compositional bias: basic and acidic residues. Phosphoserine is present on residues S816 and S817. Polar residues predominate over residues 824–852 (SSVTSILKTLRQQTSSRPQASVGEPSSSG). A compositionally biased stretch (basic and acidic residues) spans 869–884 (SDPRLSRDPRLSRHAE). 3 positions are modified to phosphoserine: S913, S916, and S917. The span at 913 to 929 (SLHSSPAGPSSSKGQPP) shows a compositional bias: low complexity. Residues 994–1005 (LPIPKQDVPPVP) show a composition bias toward pro residues. Composition is skewed to polar residues over residues 1028–1044 (NTRQ…SGSN) and 1058–1067 (VNVNTPGQSE). Residues 1068–1085 (KPSDPRVRKTPTDPRLQK) are compositionally biased toward basic and acidic residues. Composition is skewed to low complexity over residues 1098–1129 (PCPT…VLAA) and 1137–1146 (SSGQSSVLSG). Residues S1104, S1109, S1111, and S1115 each carry the phosphoserine modification. At T1119 the chain carries Phosphothreonine. Positions 1204-1220 (KASTDGATATDRYNSYN) are enriched in polar residues. The segment covering 1225–1235 (KATAAPTAASS) has biased composition (low complexity). S1270 and S1276 each carry phosphoserine.

The protein belongs to the suppressor of sable family. As to quaternary structure, interacts with WDR82.

It localises to the chromosome. Functionally, RNA-binding protein that suppresses transcription of long non-coding RNAs (lncRNAs). LncRNAs are defined as transcripts more than 200 nucleotides that are not translated into protein. Together with WDR82, part of a transcription termination checkpoint that promotes transcription termination of lncRNAs and their subsequent degradation by the exosome. The transcription termination checkpoint is activated by the inefficiently spliced first exon of lncRNAs. The protein is Zinc finger CCCH domain-containing protein 4 of Mus musculus (Mouse).